Reading from the N-terminus, the 300-residue chain is D-alanine--D-alanine ligase (300 aa).

Residues 99–293 enclose the ATP-grasp domain; the sequence is KKILKYANIN…FAELLNSIVK (195 aa). 126 to 181 contacts ATP; that stretch reads IEKIGYPVFVKPNSGGSSVATNLVKDKEGIKEAVELALKYDKEVMIENYTKGEEIT. Mg(2+) is bound by residues D248, E260, and N262.

The protein belongs to the D-alanine--D-alanine ligase family. It depends on Mg(2+) as a cofactor. The cofactor is Mn(2+).

Its subcellular location is the cytoplasm. It catalyses the reaction 2 D-alanine + ATP = D-alanyl-D-alanine + ADP + phosphate + H(+). It participates in cell wall biogenesis; peptidoglycan biosynthesis. Functionally, cell wall formation. This chain is D-alanine--D-alanine ligase, found in Clostridium botulinum (strain Langeland / NCTC 10281 / Type F).